Consider the following 232-residue polypeptide: Ribonuclease 3 (232 aa).

Residues 5-134 (QTVLKNHFEI…FLGALLLDKD (130 aa)) form the RNase III domain. Mg(2+) is bound at residue glutamate 47. Aspartate 51 is an active-site residue. Mg(2+)-binding residues include aspartate 120 and glutamate 123. The active site involves glutamate 123. One can recognise a DRBM domain in the interval 160–229 (DYKTHLQELL…AKNAVEKGLD (70 aa)).

Belongs to the ribonuclease III family. As to quaternary structure, homodimer. Requires Mg(2+) as cofactor.

The protein resides in the cytoplasm. The enzyme catalyses Endonucleolytic cleavage to 5'-phosphomonoester.. Functionally, digests double-stranded RNA. Involved in the processing of primary rRNA transcript to yield the immediate precursors to the large and small rRNAs (23S and 16S). Processes some mRNAs, and tRNAs when they are encoded in the rRNA operon. Processes pre-crRNA and tracrRNA of type II CRISPR loci if present in the organism. In Streptococcus pneumoniae (strain ATCC BAA-255 / R6), this protein is Ribonuclease 3.